An 868-amino-acid polypeptide reads, in one-letter code: Coatomer subunit gamma (868 aa).

A compositionally biased stretch (basic residues) spans 1-11 (MWRTKRGRTRR). The disordered stretch occupies residues 1-22 (MWRTKRGRTRRRDAGGNPWQNL). HEAT repeat units lie at residues 64 to 101 (REATECFFAMTKLFQSKDVVMRRMVYLGIKELSPIADD), 287 to 324 (RELSTAVSILQLFCGSSKATLRFAAVRTMNKVAMLHPP), 326 to 359 (VNVCNLDLEGLIADSNRSVATLAITTLLKTGAES), and 360 to 396 (SVERLMKQIATFVAEISDEFKLVVVQAIRSLCTKFPR).

This sequence belongs to the COPG family. Oligomeric complex that consists of at least the alpha, beta, beta', gamma, delta, epsilon and zeta subunits.

The protein localises to the cytoplasm. Its subcellular location is the golgi apparatus membrane. The protein resides in the cytoplasmic vesicle. It localises to the COPI-coated vesicle membrane. It is found in the endoplasmic reticulum. In terms of biological role, the coatomer is a cytosolic protein complex that binds to dilysine motifs and reversibly associates with Golgi non-clathrin-coated vesicles, which further mediate biosynthetic protein transport from the ER, via the Golgi up to the trans Golgi network. Coatomer complex is required for budding from Golgi membranes, and is essential for the retrograde Golgi-to-ER transport of dilysine-tagged proteins. This Anopheles gambiae (African malaria mosquito) protein is Coatomer subunit gamma.